The following is a 454-amino-acid chain: Protein odr-4 homolog (454 aa).

2 consecutive transmembrane segments (helical) span residues 82-102 (MLPG…ELAN) and 432-452 (IGVI…FHYF).

Belongs to the ODR-4 family.

It is found in the membrane. Its function is as follows. May play a role in the trafficking of a subset of G-protein coupled receptors. The protein is Protein odr-4 homolog (ODR4) of Pongo abelii (Sumatran orangutan).